The following is a 209-amino-acid chain: Ribonuclease HII (209 aa).

In terms of domain architecture, RNase H type-2 spans 19 to 208 (GLVAGVDEAG…VARALQAPVA (190 aa)). Residues aspartate 25, glutamate 26, and aspartate 117 each contribute to the a divalent metal cation site.

The protein belongs to the RNase HII family. Mn(2+) serves as cofactor. It depends on Mg(2+) as a cofactor.

Its subcellular location is the cytoplasm. The catalysed reaction is Endonucleolytic cleavage to 5'-phosphomonoester.. Functionally, endonuclease that specifically degrades the RNA of RNA-DNA hybrids. This is Ribonuclease HII from Acidovorax ebreus (strain TPSY) (Diaphorobacter sp. (strain TPSY)).